We begin with the raw amino-acid sequence, 1086 residues long: Bifunctional helicase and thymine dioxygenase JBP2 (1086 aa).

The thymine dioxygenase stretch occupies residues 1-518; that stretch reads MPVPSHVSVA…PPIYLPGRLL (518 aa). Residues 187-220 form a disordered region; sequence DESNRGVLFNSDSFGNGRGGSSISSSERSVDEND. Fe cation is bound by residues His-393, Asp-395, and His-443. Arg-457 is a 2-oxoglutarate binding site. The DNA Helicase stretch occupies residues 519-1084; it reads EVLSPVQQAA…RHGDTVRSES (566 aa). The Helicase ATP-binding domain maps to 533–708; sequence VDRLSKGNGC…YRLIGWINSD (176 aa). 546–553 is an ATP binding site; that stretch reads LTMGLGKT. A DEAH box motif is present at residues 659–662; that stretch reads DEGH. The Helicase C-terminal domain occupies 883–1041; that stretch reads VLISILHSIR…RAVPPEELLD (159 aa).

This sequence in the C-terminal section; belongs to the SNF2/RAD54 helicase family. It in the N-terminal section; belongs to the TET family. JBP2 subfamily. It depends on Fe(2+) as a cofactor.

It localises to the nucleus. The enzyme catalyses ATP + H2O = ADP + phosphate + H(+). The catalysed reaction is thymine + 2-oxoglutarate + O2 = 5-hydroxymethyluracil + succinate + CO2. Its function is as follows. Dioxygenase that catalyzes the first step of DNA base J (beta-d-glucosyl-HOMedU) biosynthesis by converting thymine to 5-hydroxymethyluracil (HOMedU). DNA base J is a hypermodified thymidine residue found in the genome of kinetoplastid parasites, which is localized primarily to repetitive DNA, namely the telomeres, and is implicated in the regulation of antigenic variation. Probably also acts as a DNA helicase. Recognizes and binds specific regions of the genome, hydrolyzes ATP and allows the DNA base J de novo synthesis. Involved in initial synthesis of DNA base J, JBP1 being able to act via the basal level of DNA base J and propagate further synthesis. In contrast to JBP1, it does not specifically bind DNA base J, however it binds chromatin. In Trypanosoma cruzi (strain CL Brener), this protein is Bifunctional helicase and thymine dioxygenase JBP2 (JBP2).